We begin with the raw amino-acid sequence, 427 residues long: Glutamyl-tRNA reductase (427 aa).

Residues 48–51 (TCNR), Ser99, 104–106 (EDQ), and Gln110 contribute to the substrate site. Cys49 acts as the Nucleophile in catalysis. Residue 179-184 (GAGEMG) coordinates NADP(+).

Belongs to the glutamyl-tRNA reductase family. Homodimer.

It catalyses the reaction (S)-4-amino-5-oxopentanoate + tRNA(Glu) + NADP(+) = L-glutamyl-tRNA(Glu) + NADPH + H(+). The protein operates within porphyrin-containing compound metabolism; protoporphyrin-IX biosynthesis; 5-aminolevulinate from L-glutamyl-tRNA(Glu): step 1/2. Its function is as follows. Catalyzes the NADPH-dependent reduction of glutamyl-tRNA(Glu) to glutamate 1-semialdehyde (GSA). This is Glutamyl-tRNA reductase from Methanocella arvoryzae (strain DSM 22066 / NBRC 105507 / MRE50).